Here is a 213-residue protein sequence, read N- to C-terminus: MAIPEAVTWDNLGSLMNNTQLNYFIPSHKNSIQYVCSDDKSRFSFVQCYLRILTLSIARFNEKSFDCSNQTIQNIYNLTMPGFFVQAPIPFCYDQNVANTKNCTLMLTSNDVMYWTYRQAVLNQPTFNNCMKPWKYIKFLSEKITNVNLTASQNIANSTMNFINRYINSSISMEKFLLTTIYNMAQPLGPRCSVEGLFSLSHYANKRLTERKN.

The sequence is that of Protein ORF D from Elephas maximus (Indian elephant).